A 313-amino-acid chain; its full sequence is Homoserine O-succinyltransferase (313 aa).

The Acyl-thioester intermediate role is filled by C142. Residues K163 and S192 each coordinate substrate. H235 serves as the catalytic Proton acceptor. E237 is an active-site residue. A substrate-binding site is contributed by R249.

This sequence belongs to the MetA family.

It is found in the cytoplasm. The catalysed reaction is L-homoserine + succinyl-CoA = O-succinyl-L-homoserine + CoA. It participates in amino-acid biosynthesis; L-methionine biosynthesis via de novo pathway; O-succinyl-L-homoserine from L-homoserine: step 1/1. Functionally, transfers a succinyl group from succinyl-CoA to L-homoserine, forming succinyl-L-homoserine. The protein is Homoserine O-succinyltransferase of Shewanella baltica (strain OS223).